Consider the following 598-residue polypeptide: MFS transporter L2 (598 aa).

3 consecutive transmembrane segments (helical) span residues 83-103 (IAAF…ATSI), 122-142 (FWAG…LGSF), and 150-170 (SLIY…AVAN). Asparagine 171 is a glycosylation site (N-linked (GlcNAc...) asparagine). 5 helical membrane-spanning segments follow: residues 183–203 (GVGG…TVPL), 212–232 (FFGM…GAFA), 239–259 (WVFW…TVFL), 277–297 (WIGM…ITWG), and 309–329 (LVPL…QEKF). An N-linked (GlcNAc...) asparagine glycan is attached at asparagine 342. A run of 6 helical transmembrane segments spans residues 346–366 (ALLY…LYFM), 383–403 (VALF…GIAI), 411–431 (WANW…ILLK), 439–459 (WIFL…AMAL), 476–496 (MFSF…GVVF), and 550–570 (YIWI…LFID).

This sequence belongs to the major facilitator superfamily.

Its subcellular location is the membrane. Functionally, MFS transporter; part of the gene cluster that mediates the biosynthesis of squalestatin S1 (SQS1, also known as zaragozic acid A), a lead compound for the treatment of hyper-cholesterolemia by targeting squalene synthase (SS). This is MFS transporter L2 from Phoma sp. (strain ATCC 20986 / MF5453).